Reading from the N-terminus, the 251-residue chain is Large ribosomal subunit protein uL3 (251 aa).

Gln151 is modified (N5-methylglutamine). The interval 221–251 (GLKQAANSNDSAAADTPAEVAAVEATEGQEG) is disordered. Residues 225–251 (AANSNDSAAADTPAEVAAVEATEGQEG) are compositionally biased toward low complexity.

It belongs to the universal ribosomal protein uL3 family. In terms of assembly, part of the 50S ribosomal subunit. Forms a cluster with proteins L14 and L19. Methylated by PrmB.

In terms of biological role, one of the primary rRNA binding proteins, it binds directly near the 3'-end of the 23S rRNA, where it nucleates assembly of the 50S subunit. The sequence is that of Large ribosomal subunit protein uL3 from Novosphingobium aromaticivorans (strain ATCC 700278 / DSM 12444 / CCUG 56034 / CIP 105152 / NBRC 16084 / F199).